A 29-amino-acid polypeptide reads, in one-letter code: Cytolysin Uc-1 (29 aa).

Polar residues predominate over residues 1–15; that stretch reads DEQTGSKGPNENLPS. The disordered stretch occupies residues 1–29; the sequence is DEQTGSKGPNENLPSQKDLXAKASXLTEV.

Its subcellular location is the secreted. It is found in the nematocyst. The protein resides in the target cell membrane. Pore-forming toxin that lyses bovine erythrocytes at nanomolar concentrations. Is devoid of enzymatic activity. Binds to monolayers and efficiently permeabilizes small lipid vesicles composed of sphingomyelin and cholesterol. The cytolytic activity is not prevented by cholesterol or sphingomyelin. This Urticina crassicornis (Mottled anemone) protein is Cytolysin Uc-1.